Reading from the N-terminus, the 601-residue chain is MSFSGEMSNGKTDVTNGGFSSSPEDMSGAEEGKENSSGIEVEASDVSLSLTADETGTTQAESRDSCSETSGEDKDSDSMDDTGHYSINDENRGNDQSHSEDEEEEEEEDEEEEAVRHRKRAQRKRANRDQESSDEERALDDWLISEKTPLPPPQWRALSALRQRQMGSSTRFIYEACGARGFVQRFHLLHGLDGHSGCVNTLHFNQRGTCLASGSDDLKVVVWDWVRRKPVLEFESGHKSNVFQAKFLPNSGDSTLAMCARDGQVRVAELSATHCCKNTKRVAQHKGASHKLALEPDSPCTFLSAGEDAVVFTIDLRQDRPASRLVVTKEKESKVGLYTIYVNPANTYQFAVGGRDQFVRIYDQRKINENVNNGVLKKFCPHHLVTSEAKANITCLVYSHDGSELLASYNDEDIYLFNSSHSDGAEYIKRYKGHRNNATVKGVNFYGPRSEFVVSGSDCGHIFLWEKSSCQIVQFMDGDKGGVVNCLEPHPHLPVLATSGLDYDVKIWLPTAKEPTELDGLKEVIKKNKRERDEDSLHHTDLFDNHMLWFLMHHLRQRGQRRRRRDAGLGAGDAESDDSPSSSDSSDDDEDGPDRVQCIPS.

2 stretches are compositionally biased toward polar residues: residues 1 to 24 (MSFS…SSPE) and 46 to 60 (VSLS…TTQA). Positions 1-150 (MSFSGEMSNG…DWLISEKTPL (150 aa)) are disordered. Positions 39 to 50 (IEVEASDVSLSL) match the Nuclear export signal motif. Positions 61–99 (ESRDSCSETSGEDKDSDSMDDTGHYSINDENRGNDQSHS) are enriched in basic and acidic residues. The stretch at 94–131 (NDQSHSEDEEEEEEEDEEEEAVRHRKRAQRKRANRDQE) forms a coiled coil. Positions 100-113 (EDEEEEEEEDEEEE) are enriched in acidic residues. Positions 116–126 (RHRKRAQRKRA) are enriched in basic residues. Over residues 127–140 (NRDQESSDEERALD) the composition is skewed to basic and acidic residues. 7 WD repeats span residues 194-233 (GHSG…PVLE), 237-278 (GHKS…CCKN), 284-324 (QHKG…PASR), 332-372 (ESKV…ENVN), 388-427 (EAKA…GAEY), 435-475 (RNNA…IVQF), and 479-519 (DKGG…TELD). The segment at 561 to 601 (RRRRRDAGLGAGDAESDDSPSSSDSSDDDEDGPDRVQCIPS) is disordered.

This sequence belongs to the WD repeat DCAF8 family.

It localises to the nucleus. The protein resides in the cytoplasm. This Xenopus laevis (African clawed frog) protein is DDB1- and CUL4-associated factor 8 (dcaf8).